The chain runs to 119 residues: Probable non-functional T cell receptor gamma variable 10 (119 aa).

Residues 1-19 (MSLLEAFAFSSWALGLGLS) form the signal peptide. Residues 24–119 (FQLSISTEVK…MAVYYCAAWD (96 aa)) enclose the Ig-like domain. A disulfide bridge connects residues C40 and C115.

Gamma-delta TR is a heterodimer composed of a gamma and delta chain; disulfide-linked. The gamma-delta TR is associated with the transmembrane signaling CD3 coreceptor proteins following the stoichiometry: a single gamma-delta TR heterodimer associates with one CD3D-CD3E heterodimer, one CD3G-CD3E heterodimer and one CD247 homodimer forming a stable octameric structure. Upon activation, gamma-delta TR complex associates with FCER1G to initiate intracellular signaling.

It localises to the cell membrane. In terms of biological role, probable non-functional open reading frame (ORF) of V region of the variable domain of T cell receptor (TR) gamma chain. Non-functional ORF generally cannot participate in the synthesis of a productive T cell receptor (TR) chain due to altered V-(D)-J or switch recombination and/or splicing site (at mRNA level) and/or conserved amino acid change (protein level). Gamma-delta TRs recognize a variety of self and foreign non-peptide antigens frequently expressed at the epithelial boundaries between the host and external environment, including endogenous lipids presented by MH-like protein CD1D and phosphoantigens presented by butyrophilin-like molecule BTN3A1. Upon antigen recognition induces rapid, innate-like immune responses involved in pathogen clearance and tissue repair. Binding of gamma-delta TR complex to antigen triggers phosphorylation of immunoreceptor tyrosine-based activation motifs (ITAMs) in the CD3 chains by the LCK and FYN kinases, allowing the recruitment, phosphorylation, and activation of ZAP70 that facilitates phosphorylation of the scaffolding proteins LCP2 and LAT. This lead to the formation of a supramolecular signalosome that recruits the phospholipase PLCG1, resulting in calcium mobilization and ERK activation, ultimately leading to T cell expansion and differentiation into effector cells. Gamma-delta TRs are produced through somatic rearrangement of a limited repertoire of variable (V), diversity (D), and joining (J) genes. The potential diversity of gamma-delta TRs is conferred by the unique ability to rearrange (D) genes in tandem and to utilize all three reading frames. The combinatorial diversity is considerably increased by the sequence exonuclease trimming and random nucleotide (N) region additions which occur during the V-(D)-J rearrangements. This Homo sapiens (Human) protein is Probable non-functional T cell receptor gamma variable 10.